Consider the following 334-residue polypeptide: MEQNSRALIDGFNRKIDYLRMSVTDRCDFRCVYCMAEDMQFLPRQQILSLEELFQVAERFVALGTRKIRLTGGEPLVRQGIVDLCGRIAALPGLRELCLTSNGSQLGRLAQPLFDAGVTRLNISLDSLDADRFKQLTRTGDLAQVIAGIDAARQAGFRRTKLNCVVLKGRNDHELVDLVRFAIERELDITFIEEMPLGVISEHERGESFCSSDEVRARLAEQFTLVESTESSMGPARYWRLAEAANTRVGFISPHSHNFCATCNRVRLTVEGRLLLCLGNEHSVDLKHVLRAHPGNPERLEKAIRDSLHLKPYRHHFEVGGDVQILRFMNMTGG.

In terms of domain architecture, Radical SAM core spans 11–236 (GFNRKIDYLR…ESTESSMGPA (226 aa)). GTP is bound at residue arginine 20. 2 residues coordinate [4Fe-4S] cluster: cysteine 27 and cysteine 31. Residue tyrosine 33 participates in S-adenosyl-L-methionine binding. Cysteine 34 is a [4Fe-4S] cluster binding site. A GTP-binding site is contributed by arginine 69. An S-adenosyl-L-methionine-binding site is contributed by glycine 73. Threonine 100 contributes to the GTP binding site. Serine 124 contributes to the S-adenosyl-L-methionine binding site. Residue lysine 161 coordinates GTP. Methionine 195 contributes to the S-adenosyl-L-methionine binding site. [4Fe-4S] cluster is bound by residues cysteine 260 and cysteine 263. 265 to 267 (RVR) is a GTP binding site. Cysteine 277 lines the [4Fe-4S] cluster pocket.

The protein belongs to the radical SAM superfamily. MoaA family. As to quaternary structure, monomer and homodimer. Requires [4Fe-4S] cluster as cofactor.

The catalysed reaction is GTP + AH2 + S-adenosyl-L-methionine = (8S)-3',8-cyclo-7,8-dihydroguanosine 5'-triphosphate + 5'-deoxyadenosine + L-methionine + A + H(+). It functions in the pathway cofactor biosynthesis; molybdopterin biosynthesis. Its function is as follows. Catalyzes the cyclization of GTP to (8S)-3',8-cyclo-7,8-dihydroguanosine 5'-triphosphate. The protein is GTP 3',8-cyclase of Pseudomonas putida (strain ATCC 700007 / DSM 6899 / JCM 31910 / BCRC 17059 / LMG 24140 / F1).